The primary structure comprises 368 residues: tRNA 2-selenouridine synthase (368 aa).

The 124-residue stretch at 15–138 (MLSGHPMIDV…MRQYLIEVID (124 aa)) folds into the Rhodanese domain. C98 acts as the S-selanylcysteine intermediate in catalysis.

Belongs to the SelU family. Monomer.

The catalysed reaction is 5-methylaminomethyl-2-thiouridine(34) in tRNA + selenophosphate + (2E)-geranyl diphosphate + H2O + H(+) = 5-methylaminomethyl-2-selenouridine(34) in tRNA + (2E)-thiogeraniol + phosphate + diphosphate. The enzyme catalyses 5-methylaminomethyl-2-thiouridine(34) in tRNA + (2E)-geranyl diphosphate = 5-methylaminomethyl-S-(2E)-geranyl-thiouridine(34) in tRNA + diphosphate. It catalyses the reaction 5-methylaminomethyl-S-(2E)-geranyl-thiouridine(34) in tRNA + selenophosphate + H(+) = 5-methylaminomethyl-2-(Se-phospho)selenouridine(34) in tRNA + (2E)-thiogeraniol. It carries out the reaction 5-methylaminomethyl-2-(Se-phospho)selenouridine(34) in tRNA + H2O = 5-methylaminomethyl-2-selenouridine(34) in tRNA + phosphate. Functionally, involved in the post-transcriptional modification of the uridine at the wobble position (U34) of tRNA(Lys), tRNA(Glu) and tRNA(Gln). Catalyzes the conversion of 2-thiouridine (S2U-RNA) to 2-selenouridine (Se2U-RNA). Acts in a two-step process involving geranylation of 2-thiouridine (S2U) to S-geranyl-2-thiouridine (geS2U) and subsequent selenation of the latter derivative to 2-selenouridine (Se2U) in the tRNA chain. This Shewanella woodyi (strain ATCC 51908 / MS32) protein is tRNA 2-selenouridine synthase.